The following is a 346-amino-acid chain: Cytidine deaminase 5 (346 aa).

CMP/dCMP-type deaminase domains lie at 20 to 148 and 183 to 304; these read TDHK…FGSE and DLCS…ITGA. Position 58–60 (58–60) interacts with substrate; that stretch reads NVE. His-71 provides a ligand contact to Zn(2+). The Proton donor role is filled by Glu-73. Cys-104 and Cys-107 together coordinate Zn(2+).

Belongs to the cytidine and deoxycytidylate deaminase family. In terms of assembly, homodimer. The cofactor is Zn(2+).

The enzyme catalyses cytidine + H2O + H(+) = uridine + NH4(+). The catalysed reaction is 2'-deoxycytidine + H2O + H(+) = 2'-deoxyuridine + NH4(+). Functionally, this enzyme scavenges exogenous and endogenous cytidine and 2'-deoxycytidine for UMP synthesis. This Arabidopsis thaliana (Mouse-ear cress) protein is Cytidine deaminase 5 (CDA5).